Reading from the N-terminus, the 509-residue chain is Legumin A (509 aa).

Positions 1-21 (MAINPSLLFLSLLFLFNGCLA) are cleaved as a signal peptide. Disulfide bonds link Cys34–Cys67 and Cys110–Cys331. The 235-residue stretch at 39–273 (LRASAPQTRI…AFNVDHDIIR (235 aa)) folds into the Cupin type-1 1 domain. 2 disordered regions span residues 187–248 (AGNP…ESSS) and 298–325 (PRME…QDNG). The segment covering 212-228 (EESEEEEGEGEEEEEED) has biased composition (acidic residues). The segment covering 299–314 (RMEEEEREERQQEQRY) has biased composition (basic and acidic residues). Residues 337–486 (ENLADPERAD…SYQVSREDAR (150 aa)) form the Cupin type-1 2 domain.

Belongs to the 11S seed storage protein (globulins) family. As to quaternary structure, hexamer; each subunit is composed of an acidic and a basic chain derived from a single precursor and linked by a disulfide bond.

Functionally, this is a seed storage protein. The sequence is that of Legumin A (LEGA) from Gossypium hirsutum (Upland cotton).